The chain runs to 252 residues: Ubiquinone biosynthesis protein COQ4 homolog 1, mitochondrial (252 aa).

Zn(2+)-binding residues include His130, Asp131, His134, and Glu146.

It belongs to the COQ4 family. As to quaternary structure, component of a multi-subunit COQ enzyme complex. It depends on Zn(2+) as a cofactor.

The protein localises to the mitochondrion inner membrane. The enzyme catalyses a 4-hydroxy-3-methoxy-5-(all-trans-polyprenyl)benzoate + H(+) = a 2-methoxy-6-(all-trans-polyprenyl)phenol + CO2. The protein operates within cofactor biosynthesis; ubiquinone biosynthesis. In terms of biological role, lyase that catalyzes the C1-decarboxylation of 4-hydroxy-3-methoxy-5-(all-trans-polyprenyl)benzoic acid into 2-methoxy-6-(all-trans-polyprenyl)phenol during ubiquinone biosynthesis. This Trypanosoma cruzi (strain CL Brener) protein is Ubiquinone biosynthesis protein COQ4 homolog 1, mitochondrial.